Consider the following 328-residue polypeptide: Glycerol-3-phosphate dehydrogenase [NAD(P)+] (328 aa).

Residues Trp11, Arg30, and Lys103 each coordinate NADPH. 3 residues coordinate sn-glycerol 3-phosphate: Lys103, Gly132, and Ser134. Ala136 serves as a coordination point for NADPH. 5 residues coordinate sn-glycerol 3-phosphate: Lys187, Asp240, Ser250, Arg251, and Asn252. Lys187 serves as the catalytic Proton acceptor. Residue Arg251 participates in NADPH binding. NADPH is bound by residues Val275 and Glu277.

This sequence belongs to the NAD-dependent glycerol-3-phosphate dehydrogenase family.

It localises to the cytoplasm. It carries out the reaction sn-glycerol 3-phosphate + NAD(+) = dihydroxyacetone phosphate + NADH + H(+). The catalysed reaction is sn-glycerol 3-phosphate + NADP(+) = dihydroxyacetone phosphate + NADPH + H(+). The protein operates within membrane lipid metabolism; glycerophospholipid metabolism. In terms of biological role, catalyzes the reduction of the glycolytic intermediate dihydroxyacetone phosphate (DHAP) to sn-glycerol 3-phosphate (G3P), the key precursor for phospholipid synthesis. The chain is Glycerol-3-phosphate dehydrogenase [NAD(P)+] from Thiobacillus denitrificans (strain ATCC 25259 / T1).